The sequence spans 104 residues: Transcription factor ILI1 (104 aa).

Residues 1–11 are compositionally biased toward basic residues; it reads MSSSRRSRSRR. A disordered region spans residues 1-27; it reads MSSSRRSRSRRAGSSVPSSSSSSRTSI. Positions 12–27 are enriched in low complexity; sequence AGSSVPSSSSSSRTSI. In terms of domain architecture, bHLH spans 16-71; it reads VPSSSSSSRTSISEDQIAELLSKLQALLPESQARNGAHRGSAARVLQETCSYIRSL.

It belongs to the bHLH protein family. Interacts with IBH1.

In terms of biological role, atypical and probable non DNA-binding bHLH transcription factor that acts as a positive regulator of cell elongation and plant development. Binds the transcription repressor IBH1 and forms a heterodimer of antagonistic bHLH transcription factors that function downstream of BZR1 to mediate brassinosteroid regulation of cell elongation and lamina inclination. The sequence is that of Transcription factor ILI1 (ILI1) from Oryza sativa subsp. indica (Rice).